The chain runs to 320 residues: Homoserine kinase (320 aa).

100–110 (PLSSGMGSSAA) contacts ATP.

It belongs to the GHMP kinase family. Homoserine kinase subfamily.

The protein resides in the cytoplasm. The enzyme catalyses L-homoserine + ATP = O-phospho-L-homoserine + ADP + H(+). Its pathway is amino-acid biosynthesis; L-threonine biosynthesis; L-threonine from L-aspartate: step 4/5. In terms of biological role, catalyzes the ATP-dependent phosphorylation of L-homoserine to L-homoserine phosphate. This Chlorobium phaeobacteroides (strain DSM 266 / SMG 266 / 2430) protein is Homoserine kinase.